Reading from the N-terminus, the 134-residue chain is Small ribosomal subunit protein uS12 (134 aa).

Aspartate 89 carries the 3-methylthioaspartic acid modification. The segment at threonine 101–lysine 134 is disordered. The segment covering glycine 125–lysine 134 has biased composition (low complexity).

Belongs to the universal ribosomal protein uS12 family. Part of the 30S ribosomal subunit. Contacts proteins S8 and S17. May interact with IF1 in the 30S initiation complex.

Functionally, with S4 and S5 plays an important role in translational accuracy. Its function is as follows. Interacts with and stabilizes bases of the 16S rRNA that are involved in tRNA selection in the A site and with the mRNA backbone. Located at the interface of the 30S and 50S subunits, it traverses the body of the 30S subunit contacting proteins on the other side and probably holding the rRNA structure together. The combined cluster of proteins S8, S12 and S17 appears to hold together the shoulder and platform of the 30S subunit. In Gemmatimonas aurantiaca (strain DSM 14586 / JCM 11422 / NBRC 100505 / T-27), this protein is Small ribosomal subunit protein uS12.